The sequence spans 137 residues: Large ribosomal subunit protein uL16 (137 aa).

Belongs to the universal ribosomal protein uL16 family. Part of the 50S ribosomal subunit.

In terms of biological role, binds 23S rRNA and is also seen to make contacts with the A and possibly P site tRNAs. The chain is Large ribosomal subunit protein uL16 from Acinetobacter baumannii (strain SDF).